We begin with the raw amino-acid sequence, 262 residues long: Indole-3-glycerol phosphate synthase (262 aa).

This sequence belongs to the TrpC family.

The enzyme catalyses 1-(2-carboxyphenylamino)-1-deoxy-D-ribulose 5-phosphate + H(+) = (1S,2R)-1-C-(indol-3-yl)glycerol 3-phosphate + CO2 + H2O. It functions in the pathway amino-acid biosynthesis; L-tryptophan biosynthesis; L-tryptophan from chorismate: step 4/5. The protein is Indole-3-glycerol phosphate synthase of Bordetella petrii (strain ATCC BAA-461 / DSM 12804 / CCUG 43448).